The chain runs to 325 residues: MEGLEENGGVVQVGELLPCKICGRTFFPVALKKHGPICQKTATKKRKTFDSSRQRAEGTDIPTVKPLKPRPEPPKKPSNWRRKHEEFIATIRAAKGLDQALKEGGKLPPPPPPSYDPDYIQCPYCQRRFNENAADRHINFCKEQAARISNKGKFSTDTKGKPTSRTQVYKPPALKKSNSPGTASSGSSRLPQPSGAGKTVVGVPSGKVSSSSSSLGNKLQTLSPSHKGIAAPHAGANVKPRNSTPPSLARNPAPGVLTNKRKTYTESYIARPDGDCASSLNGGNIKGIEGHSPGNLPKFCHECGTKYPVEWAKFCCECGIRRMIL.

The C2HC/C3H-type 1 zinc finger occupies 15–44; the sequence is ELLPCKICGRTFFPVALKKHGPICQKTATK. Residues Cys-19, Cys-22, His-34, and Cys-38 each contribute to the Zn(2+) site. Residues 43–83 are disordered; that stretch reads TKKRKTFDSSRQRAEGTDIPTVKPLKPRPEPPKKPSNWRRK. Over residues 48-58 the composition is skewed to basic and acidic residues; the sequence is TFDSSRQRAEG. Residues 118 to 147 form a C2HC/C3H-type 2 zinc finger; the sequence is DYIQCPYCQRRFNENAADRHINFCKEQAAR. Zn(2+) contacts are provided by Cys-122, Cys-125, His-137, and Cys-141. The interval 150 to 260 is disordered; the sequence is NKGKFSTDTK…NPAPGVLTNK (111 aa). Low complexity-rich tracts occupy residues 177-188 and 197-216; these read SNSPGTASSGSS and GKTVVGVPSGKVSSSSSSLG. Ser-223 is subject to Phosphoserine. At Thr-244 the chain carries Phosphothreonine. The residue at position 292 (Ser-292) is a Phosphoserine.

It belongs to the ZC2HC1 family. Zn(2+) serves as cofactor.

The protein is Zinc finger C2HC domain-containing protein 1A (ZC2HC1A) of Homo sapiens (Human).